The sequence spans 37 residues: ALRAAAVAGSPQQLLPLGQRERKAGCKNFFWKTFSSC.

A propeptide spanning residues 1–2 (AL) is cleaved from the precursor. An intrachain disulfide couples C26 to C37.

Belongs to the somatostatin family.

It localises to the secreted. In terms of biological role, somatostatin inhibits the release of somatotropin. The sequence is that of Somatostatin-37 (sst) from Petromyzon marinus (Sea lamprey).